We begin with the raw amino-acid sequence, 295 residues long: MRHLITTKDFNKVEIMELFKEASDFLDEKPRTFLEGKSITTIFFENSTRTLSSFESAARRLGARVLRLDVSRSSSSKGETLYDTAANLDAMSPNAIVVRHANSGVPLILAKHMHCPVVNGGDGKHAHPTQALLDLFTIYNHFQGNVEGKKICIVGDIKNSRVAASNIELLSRFNLDITLVAPPHFMPNTHLKKHYKLDENIIANSDIIMSLRTQTERHNKTVYASLKDYANDFCIQKSLVKDKKLILLHPGPVNRNIDISDEMMSNERTLVLKQVKNGVAIRMAVLKKLILENEG.

Carbamoyl phosphate-binding residues include arginine 49 and threonine 50. Lysine 77 is an L-aspartate binding site. The carbamoyl phosphate site is built by arginine 99, histidine 127, and glutamine 130. Arginine 161 and arginine 212 together coordinate L-aspartate. Carbamoyl phosphate contacts are provided by glycine 251 and proline 252.

Belongs to the aspartate/ornithine carbamoyltransferase superfamily. ATCase family. As to quaternary structure, heterododecamer (2C3:3R2) of six catalytic PyrB chains organized as two trimers (C3), and six regulatory PyrI chains organized as three dimers (R2).

It catalyses the reaction carbamoyl phosphate + L-aspartate = N-carbamoyl-L-aspartate + phosphate + H(+). The protein operates within pyrimidine metabolism; UMP biosynthesis via de novo pathway; (S)-dihydroorotate from bicarbonate: step 2/3. Functionally, catalyzes the condensation of carbamoyl phosphate and aspartate to form carbamoyl aspartate and inorganic phosphate, the committed step in the de novo pyrimidine nucleotide biosynthesis pathway. This chain is Aspartate carbamoyltransferase catalytic subunit, found in Campylobacter jejuni subsp. jejuni serotype O:2 (strain ATCC 700819 / NCTC 11168).